Consider the following 184-residue polypeptide: ATP synthase subunit b, chloroplastic (184 aa).

A helical membrane pass occupies residues 27–49 (LATNPINLSVVLGVLIFFGKGVL).

The protein belongs to the ATPase B chain family. As to quaternary structure, F-type ATPases have 2 components, F(1) - the catalytic core - and F(0) - the membrane proton channel. F(1) has five subunits: alpha(3), beta(3), gamma(1), delta(1), epsilon(1). F(0) has four main subunits: a(1), b(1), b'(1) and c(10-14). The alpha and beta chains form an alternating ring which encloses part of the gamma chain. F(1) is attached to F(0) by a central stalk formed by the gamma and epsilon chains, while a peripheral stalk is formed by the delta, b and b' chains.

It is found in the plastid. It localises to the chloroplast thylakoid membrane. In terms of biological role, f(1)F(0) ATP synthase produces ATP from ADP in the presence of a proton or sodium gradient. F-type ATPases consist of two structural domains, F(1) containing the extramembraneous catalytic core and F(0) containing the membrane proton channel, linked together by a central stalk and a peripheral stalk. During catalysis, ATP synthesis in the catalytic domain of F(1) is coupled via a rotary mechanism of the central stalk subunits to proton translocation. Its function is as follows. Component of the F(0) channel, it forms part of the peripheral stalk, linking F(1) to F(0). In Oenothera elata subsp. hookeri (Hooker's evening primrose), this protein is ATP synthase subunit b, chloroplastic.